Here is a 248-residue protein sequence, read N- to C-terminus: MTNLIKYLKELQNWLFDYVKKSKAKGVIFGLSGGIDSAVVAAIAKETFGFENHLALIMHINNSKLDFQATSELVKKMQFNSINIELEESFNLLVKTLGIDPKKDFLTAGNIKARLRMITLYAYAQKHNFLVLGTGNFVEYTLGYFTKWGDGACDIAPLAWLLKEDVYKLAKHFNIPEIVITRAPTASLFEGQTDETEMGITYKELDQYLKGDLILSSEKQKIVLDLKAKAEHKHNSPLKFKHLYNFQN.

30-37 (GLSGGIDS) contributes to the ATP binding site. D36 is a Mg(2+) binding site. R114 lines the deamido-NAD(+) pocket. Position 134 (T134) interacts with ATP. A Mg(2+)-binding site is contributed by E139. Residues K147 and D154 each contribute to the deamido-NAD(+) site. ATP contacts are provided by K163 and T185. Residue 232–233 (HK) participates in deamido-NAD(+) binding.

The protein belongs to the NAD synthetase family. In terms of assembly, homodimer.

The enzyme catalyses deamido-NAD(+) + NH4(+) + ATP = AMP + diphosphate + NAD(+) + H(+). Its pathway is cofactor biosynthesis; NAD(+) biosynthesis; NAD(+) from deamido-NAD(+) (ammonia route): step 1/1. Its function is as follows. Catalyzes the ATP-dependent amidation of deamido-NAD to form NAD. Uses ammonia as a nitrogen source. This chain is NH(3)-dependent NAD(+) synthetase, found in Mycoplasma genitalium (strain ATCC 33530 / DSM 19775 / NCTC 10195 / G37) (Mycoplasmoides genitalium).